The chain runs to 205 residues: Glycerol-3-phosphate acyltransferase (205 aa).

Residues 1 to 3 are Periplasmic-facing; it reads MSA. A helical transmembrane segment spans residues 4–24; the sequence is IAPGMILIAYLCGSISSAILV. Over 25 to 52 the chain is Cytoplasmic; it reads CRLCGLPDPRTSGSGNPGATNVLRIGGK. Residues 53–73 traverse the membrane as a helical segment; that stretch reads GAAVAVLIFDVLKGMLPVWGA. At 74–80 the chain is on the periplasmic side; the sequence is YELGVSP. A helical membrane pass occupies residues 81-101; sequence FWLGLIAIAACLGHIWPVFFG. At 102–111 the chain is on the cytoplasmic side; it reads FKGGKGVATA. The chain crosses the membrane as a helical span at residues 112 to 132; the sequence is FGAIAPIGWDLTGVMAGTWLL. The Periplasmic segment spans residues 133-137; it reads TVLLS. Residues 138-158 traverse the membrane as a helical segment; the sequence is GYSSLGAIVSALIAPFYVWWF. The Cytoplasmic portion of the chain corresponds to 159–205; that stretch reads KPQFTFPVSMLSCLILLRHHDNIQRLWRRQETKIWTKFKRKREKDPE.

It belongs to the PlsY family. In terms of assembly, probably interacts with PlsX.

The protein localises to the cell inner membrane. The enzyme catalyses sn-glycerol 3-phosphate + an acyl-CoA = a 1-acyl-sn-glycero-3-phosphate + CoA. The catalysed reaction is a fatty acyl-[ACP] + sn-glycerol 3-phosphate = a 1-acyl-sn-glycero-3-phosphate + holo-[ACP]. The protein operates within lipid metabolism; phospholipid metabolism. In terms of biological role, catalyzes the transfer of an acyl group from acyl-ACP to glycerol-3-phosphate (G3P) to form lysophosphatidic acid (LPA). This enzyme can also utilize acyl-CoA as fatty acyl donor, but not acyl-PO(4). This chain is Glycerol-3-phosphate acyltransferase, found in Escherichia coli O8 (strain IAI1).